A 365-amino-acid chain; its full sequence is IgG receptor FcRn large subunit p51 (365 aa).

A signal peptide spans 1-23; the sequence is MGVPRPQPWALGLLLFLLPGSLG. The interval 24-110 is alpha-1; sequence AESHLSLLYH…AFKALGGKGP (87 aa). Topologically, residues 24–297 are extracellular; sequence AESHLSLLYH…VELESPAKSS (274 aa). The alpha-2 stretch occupies residues 111-200; the sequence is YTLQGLLGCE…ERGRGNLEWK (90 aa). 2 disulfide bridges follow: cysteine 119–cysteine 182 and cysteine 221–cysteine 275. A glycan (N-linked (GlcNAc...) asparagine) is linked at asparagine 125. The alpha-3 stretch occupies residues 201-290; that stretch reads EPPSMRLKAR…GLAQPLRVEL (90 aa). In terms of domain architecture, Ig-like C1-type spans 202–289; it reads PPSMRLKARP…AGLAQPLRVE (88 aa). The segment at 291-297 is connecting peptide; it reads ESPAKSS. Residues 298 to 321 traverse the membrane as a helical segment; sequence VLVVGIVIGVLLLTAAAVGGALLW. Residues 322 to 365 are Cytoplasmic-facing; sequence RRMRSGLPAPWISLRGDDTGVLLPTPGEAQDADLKDVNVIPATA. At serine 334 the chain carries Phosphoserine.

This sequence belongs to the immunoglobulin superfamily. In terms of assembly, fcRn complex consists of two subunits: p51, and p14 which is equivalent to beta-2-microglobulin. It forms an MHC class I-like heterodimer. Interacts with albumin/ALB; this interaction regulates ALB homeostasis. As to quaternary structure, (Microbial infection) Interacts with Echovirus 6, Echovirus 11 and Echovirus 30 capsid protein VP1. As to expression, expressed in full-term placenta, heart, lung, liver, muscle, kidney, pancreas, and both fetal and adult small intestine.

It localises to the cell membrane. It is found in the endosome membrane. In terms of biological role, cell surface receptor that transfers passive humoral immunity from the mother to the newborn. Binds to the Fc region of monomeric immunoglobulin gamma and mediates its selective uptake from milk. IgG in the milk is bound at the apical surface of the intestinal epithelium. The resultant FcRn-IgG complexes are transcytosed across the intestinal epithelium and IgG is released from FcRn into blood or tissue fluids. Throughout life, contributes to effective humoral immunity by recycling IgG and extending its half-life in the circulation. Mechanistically, monomeric IgG binding to FcRn in acidic endosomes of endothelial and hematopoietic cells recycles IgG to the cell surface where it is released into the circulation. In addition of IgG, regulates homeostasis of the other most abundant circulating protein albumin/ALB. Functionally, (Microbial infection) Acts as an uncoating receptor for a panel of echoviruses including Echovirus 5, 6, 7, 9, 11, 13, 25 and 29. This chain is IgG receptor FcRn large subunit p51 (FCGRT), found in Homo sapiens (Human).